A 378-amino-acid polypeptide reads, in one-letter code: Galanin receptor 2b (378 aa).

Residues M1–S30 lie on the Extracellular side of the membrane. A helical membrane pass occupies residues V31–L51. Residues L52–T62 are Cytoplasmic-facing. Residues N63–F83 traverse the membrane as a helical segment. The Extracellular segment spans residues Q84–K101. A disulfide bridge connects residues C100 and C177. A helical membrane pass occupies residues V102–V123. Topologically, residues D124 to N143 are cytoplasmic. Residues A144 to S164 form a helical membrane-spanning segment. The Extracellular portion of the chain corresponds to Y165–K187. A helical membrane pass occupies residues V188 to S208. Over Y209–K238 the chain is Cytoplasmic. Residues M239–L259 form a helical membrane-spanning segment. Topologically, residues C260–R276 are extracellular. Residues L277–V297 form a helical membrane-spanning segment. The Cytoplasmic portion of the chain corresponds to S298–P378. The disordered stretch occupies residues E339–Q362.

Belongs to the G-protein coupled receptor 1 family. Expressed in neurons in the ventral area of the interpeduncular nucleus (IPN) where expression often overlaps with spx1.

It localises to the membrane. In terms of biological role, receptor for the hormone galanin. Receptor for the hormones spexin-1 and spexin-2. The polypeptide is Galanin receptor 2b (Danio rerio (Zebrafish)).